Here is a 100-residue protein sequence, read N- to C-terminus: Sodium-influx-stimulating peptide (100 aa).

The N-terminal stretch at 1-23 (MLSSVALRYLLVLSLAFLAVVTS) is a signal peptide.

Three disulfide bonds are present. As to expression, expressed by the yellow cells, peptidergic (neuroendocrine) neurons of the central nervous system.

Functionally, stimulates integumental Na(+) uptake. Controls the activity of sodium pumps in the integument, pericardium, ureter and nephridial gland. This Lymnaea stagnalis (Great pond snail) protein is Sodium-influx-stimulating peptide (SIS).